Reading from the N-terminus, the 414-residue chain is Putative competence-damage inducible protein (414 aa).

It belongs to the CinA family.

This chain is Putative competence-damage inducible protein, found in Limosilactobacillus fermentum (strain NBRC 3956 / LMG 18251) (Lactobacillus fermentum).